The chain runs to 335 residues: O(6)-methylguanine-induced apoptosis 2 (335 aa).

Positions 1 to 11 (MDNSTQKDQHS) are enriched in basic and acidic residues. Residues 1-20 (MDNSTQKDQHSGKKYSRKAN) form a disordered region. STPGR repeat units lie at residues 68–75 (PGPGFYNV), 110–118 (PAANAYTIP), 149–156 (PAPNQYNA), 188–215 (GPAPGHYDVNESLVKQSPKILMSCFKSK), 226–255 (GPGPGYYNPNGHPKVQKKTLIPRNPILNFS), 267–284 (LPGPGQYEIVDYTGPRKH), and 308–317 (PGPATYRPEF). Position 73 is a phosphotyrosine (tyrosine 73).

Belongs to the STPG1 family.

It is found in the cytoplasm. The protein localises to the nucleus. In terms of biological role, may positively contribute to the induction of apoptosis triggered by O(6)-methylguanine. The chain is O(6)-methylguanine-induced apoptosis 2 (STPG1) from Bos taurus (Bovine).